The sequence spans 263 residues: Glucosamine-6-phosphate deaminase 2 (263 aa).

Asp82 serves as the catalytic Proton acceptor; for enolization step. Asn151 serves as the catalytic For ring-opening step. The Proton acceptor; for ring-opening step role is filled by His153. Glu158 acts as the For ring-opening step in catalysis.

This sequence belongs to the glucosamine/galactosamine-6-phosphate isomerase family. In terms of assembly, homohexamer.

The catalysed reaction is alpha-D-glucosamine 6-phosphate + H2O = beta-D-fructose 6-phosphate + NH4(+). Its function is as follows. Catalyzes the reversible conversion of alpha-D-glucosamine 6-phosphate (GlcN-6P) into beta-D-fructose 6-phosphate (Fru-6P) and ammonium ion, a regulatory reaction step in de novo uridine diphosphate-N-acetyl-alpha-D-glucosamine (UDP-GlcNAc) biosynthesis via hexosamine pathway. In Giardia intestinalis (Giardia lamblia), this protein is Glucosamine-6-phosphate deaminase 2 (GPI2).